A 441-amino-acid chain; its full sequence is Cytochrome P450 monooxygenase cpsC (441 aa).

The segment at 175-195 (STTSQARKDETTATQQAGMEQ) is disordered. The span at 186-195 (TATQQAGMEQ) shows a compositional bias: polar residues. Cysteine 377 contacts heme.

The protein belongs to the cytochrome P450 family. It depends on heme as a cofactor.

The enzyme catalyses campesine D + reduced [NADPH--hemoprotein reductase] + O2 = campesine G + oxidized [NADPH--hemoprotein reductase] + 2 H2O + H(+). It functions in the pathway alkaloid biosynthesis. In terms of biological role, cytochrome P450 monooxygenase; part of the gene cluster that mediates the biosynthesis of campesine G, a dimeric indole piperazine alkaloid that shows good insecticidal activity Galleria mellonella. Within the pathway, cpsC catalyzes regioselective dehydrogenation reaction towards C2-N1 of the (2H)-indole ring of campesine D to yield the final product, campesine G. The non-canonical non-ribosomal peptide synthetase cpsA catalyzes the first steps of the pathway by producing L-tryptophanal and L-valinal from their respective amino-acids. These products condensate spontaneously to form trypyl-valyl pyrazine also known as didehydrocampesine A. The NmrA-like family domain-containing oxidoreductase cpsB is the next enzyme in cps pathway and reduces the unstable didehydrocampesine A to campesine A. The methyltransferase cpsF and the acetyltransferase cpsE both recognize N13 of piperazine ring to carry out methylation and acetylation of campesine A to produce campesine C and B, respectively. The cytochrome P450 monooxygenase cpsD then acts as a dimerase that catalyzes oxidative heterocoupling between campesine B and C to produce heterodimers with unexpected 6/5/6/6/6/6/5/6 eight-ring scaffold called campesine D. Finally,the cytochrome P450 monooxygenase cpsC is a regioselective dehydrogenase that catalyzes dehydrogenation reaction towards C2-N1 to produce campesine G. The polypeptide is Cytochrome P450 monooxygenase cpsC (Aspergillus campestris (strain IBT 28561)).